We begin with the raw amino-acid sequence, 544 residues long: MPVITLQYDDLEKLTGTDKETIIKRAPMIGADIERVEEESIDIEFFPDRPDLYSVEGAARAMRGFLDLETGLSKYEIKPPKVSISVSEKILRIRPFLGCAVVRGIKFTSSSIKSLMDLQEDLHWGLGRNRKKVSIGVHDLSNVKPPFRYMAVDPGFKFVPLDYTEKMSMTEILEKHPKGTRFAHLVRGFKKYPIILDSDDNVLSFPPIINGTLTSVTESTTDLFIDVTGLGEAVYTALNIVVTALAERGGQIEFVKVVRPDSGELILPDLEPKTRFLTKTEVRDLLGMELSIEEIVKQLERMRFGAKALDEETIEVKVPAYRADILHNYDLVEDIAKGYGYENIKVKIPETYTPGKSHPISLLRAPVNEIMVGLGYYEVMPFTLTSEKINFENMRRQKTDDVTYVLHPISEDQTMIRTTLLPNLLEILALNQHRELPQKIFEFGEVVNNEITGQHVAAVSIHPQANFTEIYEVVDALMREMMLPYEVKESEDPAFLEGRRADVYVNGKKLGVFGEFHPEVINNFALGYAVVGFELDLNDLIGQS.

Residues 270-346 (LEPKTRFLTK…KGYGYENIKV (77 aa)) enclose the B5 domain. Mg(2+)-binding residues include D324, D330, E333, and D334.

The protein belongs to the phenylalanyl-tRNA synthetase beta subunit family. Type 2 subfamily. In terms of assembly, tetramer of two alpha and two beta subunits. The cofactor is Mg(2+).

The protein localises to the cytoplasm. The enzyme catalyses tRNA(Phe) + L-phenylalanine + ATP = L-phenylalanyl-tRNA(Phe) + AMP + diphosphate + H(+). This chain is Phenylalanine--tRNA ligase beta subunit, found in Methanosarcina barkeri (strain Fusaro / DSM 804).